A 168-amino-acid polypeptide reads, in one-letter code: MPRSRTNGNFIDKTFSIVADILLRVIPTTSGEKEAFTYYRDGMSAQSEGNYAEALQNYYEAMRLEIDPYDRSYILYNIGLIHTSNGEHTKALEYYFRALERNPFLPQAFNNMAVICHYRGEQAIQQGDSEIAEAWFDQAAEYWKQAIALTPGNYIEAHNWLKITRRFE.

TPR repeat units follow at residues 35 to 68 (AFTY…EIDP), 72 to 105 (SYIL…NPFL), and 120 to 153 (GEQA…TPGN).

The protein belongs to the Ycf3 family.

The protein resides in the plastid. It is found in the chloroplast thylakoid membrane. Functionally, essential for the assembly of the photosystem I (PSI) complex. May act as a chaperone-like factor to guide the assembly of the PSI subunits. This is Photosystem I assembly protein Ycf3 from Solanum tuberosum (Potato).